The chain runs to 1063 residues: Exportin-1 (1063 aa).

The Importin N-terminal domain maps to 43–109; the sequence is AQSILTTLKE…KKYVVSLIIK (67 aa). A disordered region spans residues 1034 to 1063; that stretch reads AEEQSNKHQMQRNIPGMLNPHELPEDMQDE.

It belongs to the exportin family. Interacts with Clbn (via its N-terminus). Associates with the nuclear pore complex via interaction with mbo and Nup214. Interacts with target proteins containing NES sequences such as actin and dl. High expression observed in the developing embryonic brain, hind gut and posterior spiracles shortly before dorsal closure; and in the ventral nerve cord, midgut and somatic musculature shortly after dorsal closure. Expression increases when the tissue is well developed.

The protein localises to the nucleus. It is found in the nucleus membrane. In terms of biological role, receptor for the leucine-rich nuclear export signal (NES). Binds cooperatively to the NES on its target protein and to the small GTPase Ran in its active GTP-bound form. Involved in the export of dl, RpS2 and the pre-40S ribosome from the nucleus to the cytoplasm. Plays an important role in nuclear pore assembly by mediating nucleoporin condensation and biogenesis of annulate lamellae. Required for the function or maintenance of certain tissues such as brain and gut. The protein is Exportin-1 of Drosophila melanogaster (Fruit fly).